The following is a 201-amino-acid chain: Large ribosomal subunit protein bL25 (201 aa).

Belongs to the bacterial ribosomal protein bL25 family. CTC subfamily. Part of the 50S ribosomal subunit; part of the 5S rRNA/L5/L18/L25 subcomplex. Contacts the 5S rRNA. Binds to the 5S rRNA independently of L5 and L18.

This is one of the proteins that binds to the 5S RNA in the ribosome where it forms part of the central protuberance. The chain is Large ribosomal subunit protein bL25 from Ectopseudomonas mendocina (strain ymp) (Pseudomonas mendocina).